We begin with the raw amino-acid sequence, 201 residues long: Glycerol-3-phosphate acyltransferase (201 aa).

The next 6 helical transmembrane spans lie at 10–30, 60–80, 86–106, 116–136, 139–159, and 166–186; these read MLIGALIFGYVLGSIPFGLIL, LAAATLILDALKGTAAALIAA, AAIAAGFGAFIGHLFPVWIGF, LGVLIGLAWAGALVFAAAWIV, LLTRYSSLSALVASLVVPIAL, and ALAALFAIMTVIVFIKHRANI.

The protein belongs to the PlsY family. Probably interacts with PlsX.

It is found in the cell inner membrane. The enzyme catalyses an acyl phosphate + sn-glycerol 3-phosphate = a 1-acyl-sn-glycero-3-phosphate + phosphate. It functions in the pathway lipid metabolism; phospholipid metabolism. Its function is as follows. Catalyzes the transfer of an acyl group from acyl-phosphate (acyl-PO(4)) to glycerol-3-phosphate (G3P) to form lysophosphatidic acid (LPA). This enzyme utilizes acyl-phosphate as fatty acyl donor, but not acyl-CoA or acyl-ACP. This is Glycerol-3-phosphate acyltransferase from Brucella ovis (strain ATCC 25840 / 63/290 / NCTC 10512).